We begin with the raw amino-acid sequence, 179 residues long: MIIYLHGFDSSSPGNHEKVMQLKFIDEDVRFVNYSTLHPRHDMQFLLNEVHKLVSESKDPAPLICGVGLGGYWSERIGFLCGIKQAIFNPNLFPYENMTGKIDRPEEYKDIETKCVENFREKNKGKCLVFLSKEDGILDSQRSAALLSPFYEIVWDDVETHKFKKISHHLQRIKAFKQR.

Belongs to the UPF0227 family.

The chain is UPF0227 protein PM0825 from Pasteurella multocida (strain Pm70).